Consider the following 144-residue polypeptide: Transcription antitermination protein NusB (144 aa).

Belongs to the NusB family.

Functionally, involved in transcription antitermination. Required for transcription of ribosomal RNA (rRNA) genes. Binds specifically to the boxA antiterminator sequence of the ribosomal RNA (rrn) operons. The chain is Transcription antitermination protein NusB from Dictyoglomus thermophilum (strain ATCC 35947 / DSM 3960 / H-6-12).